An 850-amino-acid polypeptide reads, in one-letter code: Protein SEY1 (850 aa).

Positions 1 to 27 (MSDLPPPDLGSEEISVSPTSSSSSFVP) are disordered. The Cytoplasmic portion of the chain corresponds to 1 to 741 (MSDLPPPDLG…KRALIQHVTH (741 aa)). Low complexity predominate over residues 12–27 (EEISVSPTSSSSSFVP). In terms of domain architecture, GB1/RHD3-type G spans 64–297 (NNNYHIVSVF…NEDFLFKKYY (234 aa)). 74–81 (GSQSTGKS) lines the GTP pocket. A helical transmembrane segment spans residues 742 to 762 (IPYYIYIVILVLGWNEFMAVL). Over 763–765 (RNP) the chain is Lumenal. Residues 766-786 (FFFTLLLMLGAGTYVLYHLNL) form a helical membrane-spanning segment. At 787–850 (LKPAMVVVQR…SDLTPPGEGS (64 aa)) the chain is on the cytoplasmic side. Positions 816–850 (QPQEHAKRLSKMAGITEDKPEEIEMSDLTPPGEGS) are disordered.

It belongs to the TRAFAC class dynamin-like GTPase superfamily. GB1/RHD3 GTPase family. RHD3 subfamily.

Its subcellular location is the endoplasmic reticulum membrane. Its function is as follows. Cooperates with the reticulon proteins and tubule-shaping DP1 family proteins to generate and maintain the structure of the tubular endoplasmic reticulum network. Has GTPase activity, which is required for its function in ER organization. This is Protein SEY1 from Meyerozyma guilliermondii (strain ATCC 6260 / CBS 566 / DSM 6381 / JCM 1539 / NBRC 10279 / NRRL Y-324) (Yeast).